A 214-amino-acid polypeptide reads, in one-letter code: EEF1A lysine methyltransferase 1 (214 aa).

Ser-2 is modified (N-acetylserine). A Phosphoserine modification is found at Ser-2.

Belongs to the class I-like SAM-binding methyltransferase superfamily. EFM5 family.

The protein localises to the cytoplasm. The enzyme catalyses L-lysyl-[protein] + 3 S-adenosyl-L-methionine = N(6),N(6),N(6)-trimethyl-L-lysyl-[protein] + 3 S-adenosyl-L-homocysteine + 3 H(+). Its function is as follows. Protein N-lysine methyltransferase that selectively catalyzes the trimethylation of EEF1A at 'Lys-79'. The chain is EEF1A lysine methyltransferase 1 from Homo sapiens (Human).